The sequence spans 1279 residues: MRRHTLAIAILAALASTASVAETSDPQSLLIEQGYYWQSKKNPERALETWQKLLRLSPDQPDALYGIGLIQVQQNHPAEAQKYLARLQALSPVPRQALQLEQDITVAVPDNAKLLEQARELGEPEAEREQAVALYRQIFQGRQPQGLIAREYYNTLGFTAKGSSEAIAGLQRLTRERPNDPIVALFLAKHLARNPATRPDGIRALAKLASNNDVGGNADETWRFALVWLGPPKPDQVSLFQQFLTVHPDDSEIRALMNKGIAQGKGGGTWQRDPQMTKAFKALDDGDLKTAEPLLAARLAQKSNDVDALGGMGVLRQQQERYSEAENYLVQATRLPGGAAWQSALNDVRYWNLISQSRDAQRAGRSAQARDLVAQAERLNPGQPGAAIALAGFQAQDNQFDDAEAGYRKVLARHPGDPDALSGLINVLSQSGQPDEALKLIDSVSPAQRAKFAPSVKINALRATQVGKLAEQRGDLKAAQAAYRQALDADPENPWTRFALARMYLRDGQIRNARALIDGLLKSQPNQPDALYTSTLLSAQLSEWKQAEATLGRIPTAQRTADMNELATDIALHQQTDIAIETARRGQRPEALALLGRSEPLTRNKPERVAVLAAAYVEVGAAQYGLDMMQKVVENNPNPTVDQKLLYANVLLKANKYSEAGEILREVQGQPLTETGRQRYDDLIYLYRVKQADALREKNDLVAAYDMLSPALAQRPNDALGVGALARMYAASGNGKKAMELYAPLIQQNPNNARLQLGLADIALKGNDRGLAQSASDKALALEPGNPEILTSAARIYQGLGKNSEAAELLRKALAIENAMKAKTQVAQASAPGTSYNPFVGLPGQRRQVTDLTVAGAVPPPIDAPTKSVTSNAFASATSNDLSDPFVPPSSIASIDSPELSPARRALDTILRDRTGYVVQGLSVRSNNGEKGLSKITDVEAPFEARMPVGDNTVALRVTPVHLSAGSVKAESLSRFGKGGTEPAGSQSDSGVGLAVAFENPDQGLKADVGVSPLGFLYNTLVGGVSVSRPFEANSNFRYGANISRRPVTDSVTSFAGSEDGAGNKWGGVTANGGRGELSYDNQKLGVYGYASLHELLGNNVEDNTRLELGSGIYWYLRNNPRDTLTLGISGSAMTFKENQDFYTYGNGGYFSPQRFFSLGVPIRWAQSFDRFSYQVKSSVGLQHIAQDGADYFPGDSTLQATKNNPKYDSTSKTGVGYSFNAAAEYRLSSRFYLGGEIGLDNAQDYRQYAGNAYLRYLFEDLSGPMPLPVSPYRSPYSN.

An N-terminal signal peptide occupies residues 1–21; the sequence is MRRHTLAIAILAALASTASVA. TPR repeat units follow at residues 27 to 60, 62 to 94, 218 to 250, 306 to 339, 384 to 417, 460 to 493, 495 to 527, 606 to 639, 719 to 752, and 787 to 820; these read QSLL…SPDQ, DALY…SPVP, ADET…HPDD, VDAL…PGGA, PGAA…HPGD, ALRA…DPEN, WTRF…QPNQ, PERV…NPNP, ALGV…NPNN, and PEIL…ENAM.

It participates in glycan metabolism; bacterial cellulose biosynthesis. In terms of biological role, required for maximal bacterial cellulose synthesis. The sequence is that of Cellulose synthase operon protein C (bscS) from Pseudomonas fluorescens (strain SBW25).